Here is a 437-residue protein sequence, read N- to C-terminus: Adenylosuccinate synthetase (437 aa).

Residues 12 to 18 (GDEGKGK) and 40 to 42 (GHT) contribute to the GTP site. Aspartate 13 serves as the catalytic Proton acceptor. Residues aspartate 13 and glycine 40 each coordinate Mg(2+). IMP contacts are provided by residues 13 to 16 (DEGK), 38 to 41 (NAGH), threonine 128, arginine 142, glutamine 223, threonine 238, and arginine 302. The Proton donor role is filled by histidine 41. Substrate is bound at residue 298-304 (TTTGRRR). Residues arginine 304, 330–332 (KLD), and 412–414 (SLG) each bind GTP.

It belongs to the adenylosuccinate synthetase family. As to quaternary structure, homodimer. Requires Mg(2+) as cofactor.

The protein localises to the cytoplasm. The catalysed reaction is IMP + L-aspartate + GTP = N(6)-(1,2-dicarboxyethyl)-AMP + GDP + phosphate + 2 H(+). The protein operates within purine metabolism; AMP biosynthesis via de novo pathway; AMP from IMP: step 1/2. Plays an important role in the de novo pathway of purine nucleotide biosynthesis. Catalyzes the first committed step in the biosynthesis of AMP from IMP. This Prochlorococcus marinus (strain MIT 9313) protein is Adenylosuccinate synthetase.